A 115-amino-acid chain; its full sequence is Large ribosomal subunit protein bL19 (115 aa).

The protein belongs to the bacterial ribosomal protein bL19 family.

Its function is as follows. This protein is located at the 30S-50S ribosomal subunit interface and may play a role in the structure and function of the aminoacyl-tRNA binding site. The chain is Large ribosomal subunit protein bL19 from Buchnera aphidicola subsp. Acyrthosiphon pisum (strain Tuc7).